The chain runs to 824 residues: Intraflagellar transport protein 88 homolog (824 aa).

Disordered stretches follow at residues 1–27 (MENV…PAYD) and 111–134 (AFDP…DSPE). TPR repeat units lie at residues 196 to 229 (YSVL…KMFS), 232 to 265 (GRLK…IPSV), 271 to 304 (IKIM…APSL), 415 to 448 (NDLE…DSRV), 450 to 483 (SAAA…DRYN), 484 to 517 (PSAL…DSSC), 518 to 551 (TEAL…LRNS), 552 to 585 (AQVL…VPTD), 586 to 619 (SQAL…FPSN), 620 to 653 (IEVI…QPTQ), and 654 to 687 (VKWQ…FPEN). A compositionally biased stretch (basic and acidic residues) spans 721–731 (EMREQRIKSGR). Positions 721–824 (EMREQRIKSG…EELGDDLLPE (104 aa)) are disordered. Residues 748-757 (DSGQNNSASS) are compositionally biased toward polar residues. Residues 797–808 (ERPKTAAKKRID) are compositionally biased toward basic and acidic residues. Residues 809-824 (EDDFADEELGDDLLPE) show a composition bias toward acidic residues.

In terms of assembly, component of the IFT complex B, at least composed of IFT20, IFT22, IFT25, IFT27, IFT46, IFT52, TRAF3IP1/IFT54, IFT57, IFT74, IFT80, IFT81, and IFT88. Interacts with IFT20, IFT22, IFT25, IFT27, IFT52, TRAF3IP1, IFT74, IFT80 and IFT81. Interacts with IFT172. Interacts with IFT57. Interacts with IFT46. Interacts with IFT70B. Interacts with C2CD3. Interacts with ENTR1 (via N-terminus). Interacts with LRRC56. Interacts with DZIP1. Interacts with CCDC38. Interacts with CCDC146. Interacts with CFAP53. In terms of tissue distribution, testis.

It localises to the cytoplasm. The protein resides in the cytoskeleton. Its subcellular location is the microtubule organizing center. The protein localises to the centrosome. It is found in the centriole. It localises to the cilium basal body. The protein resides in the cell projection. Its subcellular location is the cilium. The protein localises to the flagellum. Its function is as follows. Positively regulates primary cilium biogenesis. Also involved in autophagy since it is required for trafficking of ATG16L and the expansion of the autophagic compartment. The chain is Intraflagellar transport protein 88 homolog (Ift88) from Mus musculus (Mouse).